The primary structure comprises 334 residues: MVLMDSVVIGGGAWGTAIANLLAFNTQRVTIFCRNTTVIDSINKRHINTKYLPTFPLNKNISATSRMDVLKNAELIFVAVPSQSMRELLQKVKENIKESVQIILCNKGIERESLLLMSEVVHEELPKNDIFVLSGPNFAHEVLSKKPSFSNLAGRNKTSYDKIANALSTETFFTKYITDINGTQILGAFKNVIAIICGLLVRMDAGSNTLSALMSLALEEARSFITIKNGNPDTIMEFCGIGDLVLTCFSNKSRNFRYGYRLVDGYSENALVEGKSTLESLHELARIHNINCVLTNTLYTVTQFNSYGTSSFEQDIKRELNSAFMSLLGCAKNP.

Residues W14, R34, and K107 each contribute to the NADPH site. 2 residues coordinate sn-glycerol 3-phosphate: K107 and G135. A139 is a binding site for NADPH. Sn-glycerol 3-phosphate-binding residues include K190, D243, S253, R254, and N255. The Proton acceptor role is filled by K190. R254 is an NADPH binding site. The NADPH site is built by V272 and E273.

This sequence belongs to the NAD-dependent glycerol-3-phosphate dehydrogenase family.

The protein resides in the cytoplasm. It catalyses the reaction sn-glycerol 3-phosphate + NAD(+) = dihydroxyacetone phosphate + NADH + H(+). The catalysed reaction is sn-glycerol 3-phosphate + NADP(+) = dihydroxyacetone phosphate + NADPH + H(+). It participates in membrane lipid metabolism; glycerophospholipid metabolism. Functionally, catalyzes the reduction of the glycolytic intermediate dihydroxyacetone phosphate (DHAP) to sn-glycerol 3-phosphate (G3P), the key precursor for phospholipid synthesis. The polypeptide is Glycerol-3-phosphate dehydrogenase [NAD(P)+] (Neorickettsia sennetsu (strain ATCC VR-367 / Miyayama) (Ehrlichia sennetsu)).